Consider the following 1203-residue polypeptide: Rho GTPase-activating protein gacGG (1203 aa).

7 RCC1 repeats span residues 52-104 (TGEL…AIME), 106-148 (GLLY…VVAD), 155-204 (KRSV…AIVE), 206-255 (NEVF…ARSG), 257-298 (GNVC…VLSE), 299-359 (KGEI…EGRN), and 361-410 (LSVY…YLRG). The tract at residues 316-343 (KLDVNSSPNINSSSGTTTPTTNTTTTTK) is disordered. Positions 320-343 (NSSPNINSSSGTTTPTTNTTTTTK) are enriched in low complexity. In terms of domain architecture, Rho-GAP spans 381–594 (VDIAESMRRK…TIMKQYPLME (214 aa)). The stretch at 649–679 (TLEIKNNQNNQNNQKENNNNNNNINNSNNNN) forms a coiled coil. 3 disordered regions span residues 657-725 (NNQN…TGNI), 746-789 (KDGN…NLSP), and 831-852 (FANS…LIGS). Low complexity-rich tracts occupy residues 746-788 (KDGN…PNLS) and 833-852 (NSGS…LIGS). Residues 995–1078 (FDLLEKSMTE…ISNQNLSRVN (84 aa)) adopt a coiled-coil conformation.

The protein localises to the cytoplasm. In terms of biological role, rho GTPase-activating protein involved in the signal transduction pathway. The polypeptide is Rho GTPase-activating protein gacGG (gacGG) (Dictyostelium discoideum (Social amoeba)).